The chain runs to 353 residues: AA9 family lytic polysaccharide monooxygenase A (353 aa).

The signal sequence occupies residues Met-1–Ala-19. Residues His-20 and His-102 each contribute to the Cu(2+) site. Cys-62 and Cys-183 are joined by a disulfide. Residue His-169 participates in O2 binding. A Cu(2+)-binding site is contributed by Tyr-180. Low complexity predominate over residues Lys-266–Ala-276. A disordered region spans residues Lys-266 to Ser-316. A compositionally biased stretch (acidic residues) spans Asp-279–Thr-290. A compositionally biased stretch (low complexity) spans Glu-291–Ala-304. The CBM1 domain occupies Gly-315–Ile-351. Asn-327 carries N-linked (GlcNAc...) asparagine glycosylation.

Belongs to the polysaccharide monooxygenase AA9 family. Requires Cu(2+) as cofactor.

The protein resides in the secreted. The enzyme catalyses [(1-&gt;4)-beta-D-glucosyl]n+m + reduced acceptor + O2 = 4-dehydro-beta-D-glucosyl-[(1-&gt;4)-beta-D-glucosyl]n-1 + [(1-&gt;4)-beta-D-glucosyl]m + acceptor + H2O.. In terms of biological role, lytic polysaccharide monooxygenase (LPMO) that depolymerizes crystalline and amorphous polysaccharides via the oxidation of scissile alpha- or beta-(1-4)-glycosidic bonds, yielding C4 oxidation products. Catalysis by LPMOs requires the reduction of the active-site copper from Cu(II) to Cu(I) by a reducing agent and H(2)O(2) or O(2) as a cosubstrate. This Aspergillus clavatus (strain ATCC 1007 / CBS 513.65 / DSM 816 / NCTC 3887 / NRRL 1 / QM 1276 / 107) protein is AA9 family lytic polysaccharide monooxygenase A (eglD).